Here is a 599-residue protein sequence, read N- to C-terminus: MTIEDLPDIPLEGSSLIGRYPFLFTGSDTSVIFSISAAPMPSDCEFSFFDPNDASCQEILFDPKTSVSELFAILRQWVPQVQQNIDIIGNEILKRGCNVNDRDGLTDMTLLHYTCKSGAHGIGDVETAVKFAAQLIDLGADASLRSRWTNMNALHYASYFDVPELIRVLLKTSKPKDVDATCSDFNFGTALHIAAHNLCAGAVKTLLELGANPAFRNDKGQIPADVVPDPVDMPLEMADAAAIAKEIKQMLLDSMPLPCTITKATLPNCDITTSKAMLTTLGLKLGDRVVIAGQKVGTLRFCGTTEFASGQWAGIELDEPEGKNNGSVGRVQYFKCAPKYGIFAPLSKITKVKDGRKNITHTPSTKATLHARSQKVDVAHVTSKVNSGLMTSKKENASESTLSLPRSEELKTVAKNDATQPGCISSSSSTSSLDHKQSHPKKLSTSSSSGKKTLSKSPSLPSRASAGLKSSTTSAANNTHREGALRLGERVLVVGQRVGTIKFFGTTNFAPGYWYGIELEKPHGKNDGSVGGVQYFSCSPRYGIFAPPSRVQRLSDSLDTLSEISSNKQNHSYPGFRRSFSTTSASSQKEINRRNAFAK.

ANK repeat units lie at residues 65–101, 149–180, and 186–215; these read TSVS…NVND, TNMN…DVDA, and NFGT…NPAF. A CAP-Gly 1 domain is found at 303–345; it reads GTTEFASGQWAGIELDEPEGKNNGSVGRVQYFKCAPKYGIFAP. Residues 387 to 482 form a disordered region; the sequence is SGLMTSKKEN…TSAANNTHRE (96 aa). Positions 443 to 462 are enriched in low complexity; that stretch reads LSTSSSSGKKTLSKSPSLPS. Residues 468 to 478 are compositionally biased toward polar residues; that stretch reads LKSSTTSAANN. The CAP-Gly 2 domain occupies 505-547; that stretch reads GTTNFAPGYWYGIELEKPHGKNDGSVGGVQYFSCSPRYGIFAP. At S557 the chain carries Phosphoserine. Positions 565–599 are disordered; sequence SSNKQNHSYPGFRRSFSTTSASSQKEINRRNAFAK. A compositionally biased stretch (low complexity) spans 576-587; the sequence is FRRSFSTTSASS.

This is CAP-Gly domain-containing linker protein 4 (Clip4) from Rattus norvegicus (Rat).